Reading from the N-terminus, the 292-residue chain is Alpha-soluble NSF attachment protein (292 aa).

It belongs to the SNAP family.

The protein resides in the cytoplasmic vesicle. Its subcellular location is the membrane. Its function is as follows. Required for vesicular transport between the endoplasmic reticulum and the Golgi apparatus. Also between the endosome and phagosome. This is Alpha-soluble NSF attachment protein from Drosophila melanogaster (Fruit fly).